The sequence spans 763 residues: Phosphoglycerol transferase I (763 aa).

A run of 4 helical transmembrane segments spans residues Met-1–Ala-21, Asn-24–Thr-44, Ile-77–Ile-97, and Val-108–Phe-128.

Belongs to the OpgB family.

The protein resides in the cell inner membrane. It catalyses the reaction a phosphatidylglycerol + a membrane-derived-oligosaccharide D-glucose = a 1,2-diacyl-sn-glycerol + a membrane-derived-oligosaccharide 6-(glycerophospho)-D-glucose.. It participates in glycan metabolism; osmoregulated periplasmic glucan (OPG) biosynthesis. In terms of biological role, transfers a phosphoglycerol residue from phosphatidylglycerol to the membrane-bound nascent glucan backbones. In Salmonella arizonae (strain ATCC BAA-731 / CDC346-86 / RSK2980), this protein is Phosphoglycerol transferase I.